A 281-amino-acid chain; its full sequence is Homeobox protein Hox-A5 (281 aa).

2 disordered regions span residues 65 to 144 and 162 to 183; these read VGNE…PCSS and PLEE…SDST. Composition is skewed to polar residues over residues 68 to 99 and 114 to 127; these read ERTQ…STGT and VASS…QSQH. Residues 132-144 show a composition bias toward low complexity; that stretch reads NSITTPCSTPCSS. Residues 172-183 are compositionally biased toward polar residues; sequence APTTPQNVSDST. The Antp-type hexapeptide signature appears at 187-192; the sequence is IYPWMR. The segment at residues 205–264 is a DNA-binding region (homeobox); it reads GKRARTAYTRYQTLELEKEFHFNRYLTRRRRIEIAHALCLSERQIKIWFQNRRMKWKKDN.

It belongs to the Antp homeobox family.

The protein resides in the nucleus. In terms of biological role, sequence-specific transcription factor which is part of a developmental regulatory system that provides cells with specific positional identities on the anterior-posterior axis. This is Homeobox protein Hox-A5 (hoxa5) from Morone saxatilis (Striped bass).